Reading from the N-terminus, the 161-residue chain is Putative allophycocyanin subunit alpha 2 (161 aa).

N71 is modified (N4-methylasparagine). C81 contributes to the (2R,3E)-phycocyanobilin binding site.

This sequence belongs to the phycobiliprotein family. As to quaternary structure, heterohexamer of two alpha chains, one alpha-B chain and three beta chains. Post-translationally, contains one covalently linked phycocyanobilin chromophore. The chromophore is added by phycocyanobilin lyase CpcS 1.

The protein resides in the cellular thylakoid membrane. In terms of biological role, light-harvesting photosynthetic bile pigment-protein from the phycobiliprotein complex. Allophycocyanin has a maximum absorption at approximately 650 to 653 nanometers. The protein is Putative allophycocyanin subunit alpha 2 (apcA2) of Nostoc sp. (strain PCC 7120 / SAG 25.82 / UTEX 2576).